The chain runs to 508 residues: Argininosuccinate lyase (508 aa).

Belongs to the lyase 1 family. Argininosuccinate lyase subfamily.

It is found in the cytoplasm. The catalysed reaction is 2-(N(omega)-L-arginino)succinate = fumarate + L-arginine. It participates in amino-acid biosynthesis; L-arginine biosynthesis; L-arginine from L-ornithine and carbamoyl phosphate: step 3/3. This Methanopyrus kandleri (strain AV19 / DSM 6324 / JCM 9639 / NBRC 100938) protein is Argininosuccinate lyase.